Reading from the N-terminus, the 159-residue chain is Small ribosomal subunit protein bS6 (159 aa).

Residues selenocysteine 46 and selenocysteine 52 are each a non-standard amino acid (selenocysteine).

The protein belongs to the bacterial ribosomal protein bS6 family.

Its function is as follows. Binds together with bS18 to 16S ribosomal RNA. This chain is Small ribosomal subunit protein bS6, found in Desulfotalea psychrophila (strain LSv54 / DSM 12343).